Here is a 160-residue protein sequence, read N- to C-terminus: Fimbrial protein (160 aa).

A propeptide spans 1 to 7 (MKSLQKG) (leader sequence). Residue Phe8 is modified to N-methylphenylalanine. Residues 8–28 (FTLIELMIVVAIIGILAAFAI) form a helical membrane-spanning segment.

It belongs to the N-Me-Phe pilin family. In terms of assembly, the pili are polar flexible filaments of about 5.4 nanometers diameter and 2.5 micrometers average length; they consist of only a single polypeptide chain arranged in a helical configuration of five subunits per turn in the assembled pilus.

Its subcellular location is the fimbrium. It is found in the membrane. This chain is Fimbrial protein (fimA), found in Dichelobacter nodosus (Bacteroides nodosus).